Here is a 108-residue protein sequence, read N- to C-terminus: Nucleoid-associated protein HCH_02614 (108 aa).

Belongs to the YbaB/EbfC family. Homodimer.

The protein localises to the cytoplasm. Its subcellular location is the nucleoid. In terms of biological role, binds to DNA and alters its conformation. May be involved in regulation of gene expression, nucleoid organization and DNA protection. This is Nucleoid-associated protein HCH_02614 from Hahella chejuensis (strain KCTC 2396).